We begin with the raw amino-acid sequence, 475 residues long: L-ornithine N(5)-monooxygenase (475 aa).

Residues 65–73 and Gln84 each bind FAD; that span reads ERQPEFGWH. Lys89 contributes to the substrate binding site. Val150 lines the FAD pocket. 238–241 is a binding site for NADP(+); sequence GGQS. Substrate is bound by residues 277–280 and Asn307; that span reads NEIF. Position 307 to 309 (307 to 309) interacts with NADP(+); sequence NYG. FAD is bound at residue 446-448; the sequence is SLL. Ser449 provides a ligand contact to substrate.

This sequence belongs to the lysine N(6)-hydroxylase/L-ornithine N(5)-oxygenase family. In terms of assembly, homotetramer. Requires FAD as cofactor.

It carries out the reaction L-ornithine + NADPH + O2 = N(5)-hydroxy-L-ornithine + NADP(+) + H2O. The enzyme catalyses L-ornithine + NADH + O2 = N(5)-hydroxy-L-ornithine + NAD(+) + H2O. It functions in the pathway siderophore biosynthesis. Functionally, L-ornithine N(5)-monooxygenase; part of the gene cluster that mediates the biosynthesis of hydroxamate-containing siderophores that play a critical role in virulence via intracellular iron acquisition during macrophage infection. SID1 catalyzes the conversion of L-ornithine to N(5)-hydroxyornithine, the first step in the biosynthesis of all hydroxamate-containing siderophores. The sequence is that of L-ornithine N(5)-monooxygenase from Ajellomyces capsulatus (Darling's disease fungus).